Reading from the N-terminus, the 582-residue chain is ATP-dependent lipid A-core flippase (582 aa).

6 helical membrane-spanning segments follow: residues 27–48, 63–85, 144–168, 170–188, 244–266, and 283–302; these read LVVS…ISLL, FLRI…GFAS, VSIV…WQLS, VLIV…VSKR, LVSA…LFAV, and TFTV…KALT. The 283-residue stretch at 28-310 folds into the ABC transmembrane type-1 domain; the sequence is VVSTIALVIN…LTSVTSEFQR (283 aa). Residues 342-578 enclose the ABC transporter domain; it reads VDVKDVTFTY…DGAYAQLHRI (237 aa). 376–383 serves as a coordination point for ATP; sequence GRSGSGKS.

It belongs to the ABC transporter superfamily. Lipid exporter (TC 3.A.1.106) family. Homodimer.

The protein resides in the cell inner membrane. It carries out the reaction ATP + H2O + lipid A-core oligosaccharideSide 1 = ADP + phosphate + lipid A-core oligosaccharideSide 2.. Functionally, involved in lipopolysaccharide (LPS) biosynthesis. Translocates lipid A-core from the inner to the outer leaflet of the inner membrane. Transmembrane domains (TMD) form a pore in the inner membrane and the ATP-binding domain (NBD) is responsible for energy generation. Shows ATPase activity. In Vibrio cholerae serotype O1 (strain ATCC 39315 / El Tor Inaba N16961), this protein is ATP-dependent lipid A-core flippase.